The following is a 217-amino-acid chain: MAERRIPLKHEYAQDGKVIYGVDEAGRGPLAGPVYAACVVLDPADVIEGLADSKQLSEKKRISLADQIKQRARAWAIASASVEEIDRLNILQASLLAMQRAVVSLRPISNALVLVDGNHAPRLDCEVQTVIRGDSLVAEISAASILAKTARDIEMLRLHEAYPVYGFDRHKGYPTKAHLEAIRLHGITDIHRRSFAPCVGQSVSGARTTSFINQKEA.

The RNase H type-2 domain occupies 17 to 207 (KVIYGVDEAG…CVGQSVSGAR (191 aa)). Positions 23, 24, and 116 each coordinate a divalent metal cation.

This sequence belongs to the RNase HII family. Mn(2+) serves as cofactor. It depends on Mg(2+) as a cofactor.

The protein localises to the cytoplasm. The enzyme catalyses Endonucleolytic cleavage to 5'-phosphomonoester.. Functionally, endonuclease that specifically degrades the RNA of RNA-DNA hybrids. This is Ribonuclease HII from Nitrosomonas europaea (strain ATCC 19718 / CIP 103999 / KCTC 2705 / NBRC 14298).